Here is a 617-residue protein sequence, read N- to C-terminus: Proline--tRNA ligase (617 aa).

The protein belongs to the class-II aminoacyl-tRNA synthetase family. ProS type 1 subfamily. Homodimer.

The protein localises to the cytoplasm. The enzyme catalyses tRNA(Pro) + L-proline + ATP = L-prolyl-tRNA(Pro) + AMP + diphosphate. Its function is as follows. Catalyzes the attachment of proline to tRNA(Pro) in a two-step reaction: proline is first activated by ATP to form Pro-AMP and then transferred to the acceptor end of tRNA(Pro). As ProRS can inadvertently accommodate and process non-cognate amino acids such as alanine and cysteine, to avoid such errors it has two additional distinct editing activities against alanine. One activity is designated as 'pretransfer' editing and involves the tRNA(Pro)-independent hydrolysis of activated Ala-AMP. The other activity is designated 'posttransfer' editing and involves deacylation of mischarged Ala-tRNA(Pro). The misacylated Cys-tRNA(Pro) is not edited by ProRS. In Treponema pallidum (strain Nichols), this protein is Proline--tRNA ligase.